Reading from the N-terminus, the 295-residue chain is MSKIPSVNIKALLDAGVHFGHKTSRWNPKMASYIYGKRDDVHIIDLRQSVALMNVALNAIYETVKKDGKILFVSTKIQASDIIAEYAEKCGQYYVNHRWLGGMLTNWKTIAGSIEKLNKLDKTLENEEALMGYTKKEILDMSRKKDKLLLSLAGIRNLNSKPDLLVVIDTNKEHIAINEAVKLNVPIVAVVDTNSNPDNVDYPIPGNDDSIRSIRLYCSLFADAALQGLEESMKASGVDMGAMQEHTDKGLTSKNVSKLKQAKKFSKTKNIDEETNTEFEQVLNDADENKNSDNA.

Residues 261-295 form a disordered region; sequence QAKKFSKTKNIDEETNTEFEQVLNDADENKNSDNA.

This sequence belongs to the universal ribosomal protein uS2 family.

The polypeptide is Small ribosomal subunit protein uS2 (Rickettsia rickettsii (strain Sheila Smith)).